Reading from the N-terminus, the 266-residue chain is Glucosamine-6-phosphate deaminase (266 aa).

The Proton acceptor; for enolization step role is filled by aspartate 72. Aspartate 141 functions as the For ring-opening step in the catalytic mechanism. The active-site Proton acceptor; for ring-opening step is histidine 143. Glutamate 148 functions as the For ring-opening step in the catalytic mechanism.

The protein belongs to the glucosamine/galactosamine-6-phosphate isomerase family. NagB subfamily. As to quaternary structure, homohexamer; trimer of disulfide-linked dimers.

It catalyses the reaction alpha-D-glucosamine 6-phosphate + H2O = beta-D-fructose 6-phosphate + NH4(+). It participates in amino-sugar metabolism; N-acetylneuraminate degradation; D-fructose 6-phosphate from N-acetylneuraminate: step 5/5. With respect to regulation, allosterically activated by N-acetylglucosamine 6-phosphate (GlcNAc6P). Its function is as follows. Catalyzes the reversible isomerization-deamination of glucosamine 6-phosphate (GlcN6P) to form fructose 6-phosphate (Fru6P) and ammonium ion. In Shigella flexneri serotype 5b (strain 8401), this protein is Glucosamine-6-phosphate deaminase.